Reading from the N-terminus, the 408-residue chain is 2,3-bisphosphoglycerate-independent phosphoglycerate mutase 1 (408 aa).

It belongs to the BPG-independent phosphoglycerate mutase family. A-PGAM subfamily. In terms of assembly, monomer. The cofactor is Mn(2+).

It carries out the reaction (2R)-2-phosphoglycerate = (2R)-3-phosphoglycerate. Its pathway is carbohydrate degradation; glycolysis; pyruvate from D-glyceraldehyde 3-phosphate: step 3/5. Catalyzes the interconversion of 2-phosphoglycerate and 3-phosphoglycerate. In Archaeoglobus fulgidus (strain ATCC 49558 / DSM 4304 / JCM 9628 / NBRC 100126 / VC-16), this protein is 2,3-bisphosphoglycerate-independent phosphoglycerate mutase 1 (apgM1).